The primary structure comprises 1125 residues: Probable inorganic carbon transporter subunit DabA (1125 aa).

4 residues coordinate Zn(2+): cysteine 578, aspartate 580, histidine 769, and cysteine 784. A disordered region spans residues 1106–1125; sequence SDPRPPALVEPKQTETHHAA.

This sequence belongs to the inorganic carbon transporter (TC 9.A.2) DabA family. Forms a complex with DabB. Zn(2+) serves as cofactor.

It is found in the cell inner membrane. Functionally, part of an energy-coupled inorganic carbon pump. This is Probable inorganic carbon transporter subunit DabA from Nitrosococcus oceani (strain ATCC 19707 / BCRC 17464 / JCM 30415 / NCIMB 11848 / C-107).